We begin with the raw amino-acid sequence, 275 residues long: NH(3)-dependent NAD(+) synthetase (275 aa).

ATP is bound at residue 47 to 54; that stretch reads GISGGQDS. A Mg(2+)-binding site is contributed by D53. R141 contributes to the deamido-NAD(+) binding site. Position 161 (T161) interacts with ATP. Residue E166 coordinates Mg(2+). Deamido-NAD(+)-binding residues include K174 and D181. Positions 190 and 212 each coordinate ATP. Residue 261-262 participates in deamido-NAD(+) binding; it reads HK.

Belongs to the NAD synthetase family. Homodimer.

It carries out the reaction deamido-NAD(+) + NH4(+) + ATP = AMP + diphosphate + NAD(+) + H(+). It functions in the pathway cofactor biosynthesis; NAD(+) biosynthesis; NAD(+) from deamido-NAD(+) (ammonia route): step 1/1. Its function is as follows. Catalyzes the ATP-dependent amidation of deamido-NAD to form NAD. Uses ammonia as a nitrogen source. This is NH(3)-dependent NAD(+) synthetase from Lacticaseibacillus casei (strain BL23) (Lactobacillus casei).